We begin with the raw amino-acid sequence, 266 residues long: Cytochrome c oxidase assembly factor 7 homolog (266 aa).

2 Sel1-like repeats span residues 32-64 and 66-104; these read PEACHLLGDYLEGIKKDFEKASKVYKSTCDDYG and AKSCYKYGNYSFLGKGKSGSKGNPQVAYEYYEKGCNLND. Residues 166–179 are compositionally biased toward low complexity; it reads AVTASSGSGTSSPP. Residues 166–187 form a disordered region; that stretch reads AVTASSGSGTSSPPAGQPPLKD. Residues 212–247 form a Sel1-like 3 repeat; that stretch reads MYACANLSQMYARGDGIEKNEKEAEKYKKLALEMQD.

Belongs to the hcp beta-lactamase family.

Required for locomotion. Probably involved in the regulation of formation/maintenance of motor neurons at presynaptic terminals at the neuromuscular junction. The sequence is that of Cytochrome c oxidase assembly factor 7 homolog from Drosophila melanogaster (Fruit fly).